The sequence spans 400 residues: Snake venom metalloproteinase H3 (400 aa).

A signal peptide spans 1-6; the sequence is FPYQGS. The propeptide occupies 7-176; the sequence is SIILESGNVN…KKASQLIVST (170 aa). The 198-residue stretch at 180-377 folds into the Peptidase M12B domain; it reads KYMEIVIVVD…ENPPCILNKP (198 aa). The Ca(2+) site is built by glutamate 183 and aspartate 267. 3 disulfides stabilise this stretch: cysteine 291-cysteine 372, cysteine 331-cysteine 356, and cysteine 333-cysteine 339. Residue histidine 316 participates in Zn(2+) binding. Residue glutamate 317 is part of the active site. Zn(2+)-binding residues include histidine 320 and histidine 326. Ca(2+) is bound by residues cysteine 372, asparagine 375, valine 387, asparagine 390, leucine 392, glutamate 394, and aspartate 400. Residues 378–400 constitute a propeptide that is removed on maturation; the sequence is LRTDTVSTPVSGNELLEAGKDYD.

The protein belongs to the venom metalloproteinase (M12B) family. P-I subfamily. As to quaternary structure, monomer. Requires Zn(2+) as cofactor. In terms of tissue distribution, expressed by the venom gland.

The protein localises to the secreted. Its function is as follows. Snake venom metalloproteinase that impairs hemostasis in the envenomed animal. The sequence is that of Snake venom metalloproteinase H3 from Deinagkistrodon acutus (Hundred-pace snake).